Consider the following 430-residue polypeptide: MRSYEKSKTAFKEAQKLMPGGVNSPVRAFKSVDMDPIFMERGKGSKIFDIDGNEYIDYVLSWGPLILGHTNDRVVESLKKVAEYGTSFGAPTEVENELAKLVIDRVPSVEIVRMVSSGTEATMSALRLARGYTGRNKILKFEGCYHGHGDSLLIKAGSGVATLGLPDSPGVPEGIAKNTITVPYNDLESVKLAFQQFGEDIAGVIVEPVAGNMGVVPPQEGFLQGLRDITEQYGSLLIFDEVMTGFRVDYNCAQGYFGVTPDLTCLGKVIGGGLPVGAYGGKAEIMEQIAPSGPIYQAGTLSGNPLAMTAGLETLKQLTPESYKNFIKKGDRLEEGISKTAGAHGIPHTFNRAGSMIGFFFTNEPVINYETAKSSDLKLFASYYKGMANEGVFLPPSQFEGLFLSTAHTDEDIENTIQAAEKVFAEISRR.

N6-(pyridoxal phosphate)lysine is present on lysine 268.

Belongs to the class-III pyridoxal-phosphate-dependent aminotransferase family. HemL subfamily. As to quaternary structure, homodimer. The cofactor is pyridoxal 5'-phosphate.

Its subcellular location is the cytoplasm. It carries out the reaction (S)-4-amino-5-oxopentanoate = 5-aminolevulinate. Its pathway is porphyrin-containing compound metabolism; protoporphyrin-IX biosynthesis; 5-aminolevulinate from L-glutamyl-tRNA(Glu): step 2/2. This is Glutamate-1-semialdehyde 2,1-aminomutase (hemL) from Bacillus subtilis (strain 168).